We begin with the raw amino-acid sequence, 318 residues long: NADH-ubiquinone oxidoreductase chain 1 (318 aa).

8 helical membrane-spanning segments follow: residues 2 to 22 (FMINVLLLIIPILLAVAFLTL), 70 to 90 (MFIIAPILALTLALTMWIPLP), 100 to 120 (LGILFMLAMSSLAVYSILWSG), 147 to 167 (AIILLSVLLMSGSFTLSTLII), 171 to 191 (YLWLIFPSWPLAMMWFISTLA), 217 to 237 (AGPFALFFLAEYANIIMMNIF), 254 to 276 (LYSINFTMKTLLLTCSFLWIRAS), and 294 to 314 (LPLTLALCMWHVSLPIMLSSI).

It belongs to the complex I subunit 1 family. In terms of assembly, core subunit of respiratory chain NADH dehydrogenase (Complex I) which is composed of 45 different subunits.

The protein localises to the mitochondrion inner membrane. It catalyses the reaction a ubiquinone + NADH + 5 H(+)(in) = a ubiquinol + NAD(+) + 4 H(+)(out). Functionally, core subunit of the mitochondrial membrane respiratory chain NADH dehydrogenase (Complex I) which catalyzes electron transfer from NADH through the respiratory chain, using ubiquinone as an electron acceptor. Essential for the catalytic activity and assembly of complex I. The sequence is that of NADH-ubiquinone oxidoreductase chain 1 (MT-ND1) from Equus asinus (Donkey).